Here is a 261-residue protein sequence, read N- to C-terminus: CD40 ligand (261 aa).

Topologically, residues M1–K22 are cytoplasmic. The helical; Signal-anchor for type II membrane protein transmembrane segment at I23–A43 threads the bilayer. Residues V44–L261 lie on the Extracellular side of the membrane. Residues I122 to L261 form the THD domain. A disulfide bridge connects residues C178 and C218. N240 carries N-linked (GlcNAc...) asparagine glycosylation.

This sequence belongs to the tumor necrosis factor family. Homotrimer. Interacts with CD28. CD40 ligand, soluble form: Exists as either a monomer or a homotrimer. Forms a ternary complex between CD40 and integrins for CD40-CD40LG signaling. In terms of processing, the soluble form derives from the membrane form by proteolytic processing.

The protein resides in the cell membrane. Its subcellular location is the cell surface. It is found in the secreted. Its function is as follows. Cytokine that acts as a ligand to CD40/TNFRSF5. Costimulates T-cell proliferation and cytokine production. Its cross-linking on T-cells generates a costimulatory signal which enhances the production of IL4 and IL10 in conjunction with the TCR/CD3 ligation and CD28 costimulation. Induces the activation of NF-kappa-B. Induces the activation of kinases MAPK8 and PAK2 in T-cells. Mediates B-cell proliferation in the absence of co-stimulus as well as IgE production in the presence of IL4. Involved in immunoglobulin class switching. Functionally, acts as a ligand for integrins, specifically ITGA5:ITGB1 and ITGAV:ITGB3; both integrins and the CD40 receptor are required for activation of CD40-CD40LG signaling, which have cell-type dependent effects, such as B-cell activation, NF-kappa-B signaling and anti-apoptotic signaling. In Cercocebus atys (Sooty mangabey), this protein is CD40 ligand (CD40LG).